A 166-amino-acid chain; its full sequence is Small ribosomal subunit protein uS9 (166 aa).

Over residues Met-1–Glu-16 the composition is skewed to acidic residues. A disordered region spans residues Met-1 to Gly-45.

This sequence belongs to the universal ribosomal protein uS9 family.

This Nocardioides sp. (strain ATCC BAA-499 / JS614) protein is Small ribosomal subunit protein uS9.